The chain runs to 223 residues: METVLSLLNEFGFERTVEPLSDPIVVHAVPGSGKTTLIKQALIRNNNIEAVTFGVPEKANIHGTYIKKARQGQRGRGNYSILDEYLSGEYSTGFNCLFSDPYQNHGDCLRAHFIGRCSHRFGRQTVQILRDLGYNIASSKEDIVEKKNIFQLIEPEGVIICLEKGVEDFLKWHSVEYKFPCQVRGATFDIVTFIHEKPLEELVGPDLFVALTRHRSKLVLVSN.

Residues 1–136 (METVLSLLNE…QILRDLGYNI (136 aa)) form the (+)RNA virus helicase ATP-binding domain. One can recognise a (+)RNA virus helicase C-terminal domain in the interval 137–223 (ASSKEDIVEK…HRSKLVLVSN (87 aa)).

Belongs to the Tymovirales TGBp1 protein family. Homodimer and homooligomer. Interacts with capsid protein. Interacts with host AGO1; this interaction targets the host protein for degradation, thereby suppressing the antiviral RNA silencing.

The protein resides in the host cytoplasm. Its function is as follows. Transports viral genome to neighboring plant cells directly through plasmosdesmata, without any budding. The movement protein allows efficient cell to cell propagation, by bypassing the host cell wall barrier. Increases plasmodesma size exclusion limit. Acts as a suppressor of RNA-mediated gene silencing, also known as post-transcriptional gene silencing (PTGS), a mechanism of plant viral defense that limits the accumulation of viral RNAs. The protein is Movement and silencing protein TGBp1 of Crataegus (hawthorn).